The following is a 103-amino-acid chain: Large ribosomal subunit protein bL21 (103 aa).

The protein belongs to the bacterial ribosomal protein bL21 family. In terms of assembly, part of the 50S ribosomal subunit. Contacts protein L20.

Functionally, this protein binds to 23S rRNA in the presence of protein L20. In Mycobacterium tuberculosis (strain ATCC 25618 / H37Rv), this protein is Large ribosomal subunit protein bL21.